A 359-amino-acid polypeptide reads, in one-letter code: Alanine racemase, biosynthetic (359 aa).

Lys34 (proton acceptor; specific for D-alanine) is an active-site residue. Lys34 is modified (N6-(pyridoxal phosphate)lysine). Arg129 is a binding site for substrate. Tyr255 functions as the Proton acceptor; specific for L-alanine in the catalytic mechanism. Substrate is bound at residue Met303.

The protein belongs to the alanine racemase family. Pyridoxal 5'-phosphate is required as a cofactor.

The catalysed reaction is L-alanine = D-alanine. Its pathway is amino-acid biosynthesis; D-alanine biosynthesis; D-alanine from L-alanine: step 1/1. The protein operates within cell wall biogenesis; peptidoglycan biosynthesis. Its function is as follows. Catalyzes the interconversion of L-alanine and D-alanine. Provides the D-alanine required for cell wall biosynthesis. This Escherichia coli O6:H1 (strain CFT073 / ATCC 700928 / UPEC) protein is Alanine racemase, biosynthetic (alr).